A 398-amino-acid polypeptide reads, in one-letter code: MIQTISSSRPWSVNTPTALLVLADGTVIEGKGAGATGIAEAELCFNTAITGYEEILTDPSYTQQIVNFTFPHIGNVGANSEDIESLTPLSCHGAVGAIFKADITHPSNYRASENLHQWLKARKIIALCGIDTRALTILIREKGTQNAVIAHNSDGNFDIPSLKKRAQKWHGLVNLDLTEEVTSPSSIEWDEEPWCWNKGYGTNNVHNLHIVAIDYGIKRNILRLMATQKARITVVPAHTTAKEILAMTPDGVFLSNGPGDPAATAQYAIPTINTLIDHNLPIFGICLGHQLLALAVGAKTVKMHQGHHGANHPVKDLNSGKVEIVSMNHGFAVDAATLPKHVQETHISLFDGSNCGIRIIGKPVFSVQYHPEASPGPQDSHYLFQHFCDLIMNHKKIS.

A CPSase region spans residues 1–207; it reads MIQTISSSRP…KGYGTNNVHN (207 aa). L-glutamine contacts are provided by serine 60, glycine 257, and glycine 259. The 189-residue stretch at 209 to 397 folds into the Glutamine amidotransferase type-1 domain; it reads HIVAIDYGIK…CDLIMNHKKI (189 aa). Cysteine 286 acts as the Nucleophile in catalysis. L-glutamine is bound by residues leucine 287, glutamine 290, asparagine 328, glycine 330, and phenylalanine 331. Catalysis depends on residues histidine 370 and glutamate 372.

This sequence belongs to the CarA family. In terms of assembly, composed of two chains; the small (or glutamine) chain promotes the hydrolysis of glutamine to ammonia, which is used by the large (or ammonia) chain to synthesize carbamoyl phosphate. Tetramer of heterodimers (alpha,beta)4.

It carries out the reaction hydrogencarbonate + L-glutamine + 2 ATP + H2O = carbamoyl phosphate + L-glutamate + 2 ADP + phosphate + 2 H(+). The catalysed reaction is L-glutamine + H2O = L-glutamate + NH4(+). Its pathway is amino-acid biosynthesis; L-arginine biosynthesis; carbamoyl phosphate from bicarbonate: step 1/1. It functions in the pathway pyrimidine metabolism; UMP biosynthesis via de novo pathway; (S)-dihydroorotate from bicarbonate: step 1/3. Functionally, small subunit of the glutamine-dependent carbamoyl phosphate synthetase (CPSase). CPSase catalyzes the formation of carbamoyl phosphate from the ammonia moiety of glutamine, carbonate, and phosphate donated by ATP, constituting the first step of 2 biosynthetic pathways, one leading to arginine and/or urea and the other to pyrimidine nucleotides. The small subunit (glutamine amidotransferase) binds and cleaves glutamine to supply the large subunit with the substrate ammonia. This Bartonella tribocorum (strain CIP 105476 / IBS 506) protein is Carbamoyl phosphate synthase small chain.